A 99-amino-acid chain; its full sequence is Small ribosomal subunit protein uS19 (99 aa).

Belongs to the universal ribosomal protein uS19 family.

Functionally, protein S19 forms a complex with S13 that binds strongly to the 16S ribosomal RNA. The polypeptide is Small ribosomal subunit protein uS19 (Sulfurihydrogenibium sp. (strain YO3AOP1)).